The chain runs to 250 residues: Glycerol-1-phosphate phosphohydrolase 1 (250 aa).

The Nucleophile role is filled by D18. 2 residues coordinate Mg(2+): D18 and D20. D20 functions as the Proton donor in the catalytic mechanism. A Glycyl lysine isopeptide (Lys-Gly) (interchain with G-Cter in SUMO); alternate cross-link involves residue K64. A Glycyl lysine isopeptide (Lys-Gly) (interchain with G-Cter in ubiquitin); alternate cross-link involves residue K64. S90 is subject to Phosphoserine. Residue K144 forms a Glycyl lysine isopeptide (Lys-Gly) (interchain with G-Cter in ubiquitin) linkage. A Mg(2+)-binding site is contributed by D179.

Belongs to the HAD-like hydrolase superfamily. DOG/GPP family. In terms of assembly, monomer. Mg(2+) is required as a cofactor.

Its subcellular location is the cytoplasm. It localises to the nucleus. The enzyme catalyses sn-glycerol 1-phosphate + H2O = glycerol + phosphate. It catalyses the reaction sn-glycerol 3-phosphate + H2O = glycerol + phosphate. In terms of biological role, major isoform of glycerol-1-phosphate phosphohydrolase involved in glycerol biosynthesis. Plays a role in osmoadaptation and required for adaptation to anaerobic conditions. This chain is Glycerol-1-phosphate phosphohydrolase 1, found in Saccharomyces cerevisiae (strain ATCC 204508 / S288c) (Baker's yeast).